We begin with the raw amino-acid sequence, 548 residues long: Glucose-6-phosphate isomerase (548 aa).

The active-site Proton donor is E353. Catalysis depends on residues H384 and K512.

The protein belongs to the GPI family.

It localises to the cytoplasm. It carries out the reaction alpha-D-glucose 6-phosphate = beta-D-fructose 6-phosphate. It functions in the pathway carbohydrate biosynthesis; gluconeogenesis. Its pathway is carbohydrate degradation; glycolysis; D-glyceraldehyde 3-phosphate and glycerone phosphate from D-glucose: step 2/4. In terms of biological role, catalyzes the reversible isomerization of glucose-6-phosphate to fructose-6-phosphate. The protein is Glucose-6-phosphate isomerase of Chlorobium chlorochromatii (strain CaD3).